The following is a 393-amino-acid chain: Sialyltransferase-like protein 1 (393 aa).

Residues 1-8 are Cytoplasmic-facing; it reads MKRPLRRP. The chain crosses the membrane as a helical; Signal-anchor for type II membrane protein span at residues 9–27; the sequence is FAVLLFVVLCAAASFPSVL. Residues 28 to 393 are Lumenal-facing; it reads RRSVGPAPVL…IAVPPVVFYH (366 aa). N-linked (GlcNAc...) asparagine glycans are attached at residues N49, N212, and N258.

It belongs to the glycosyltransferase 29 family. Expressed in leaves and stalks. Expressed at low levels in roots.

The protein resides in the golgi apparatus membrane. Possesses sialyltransferase-like activity in vitro. Transfers sialic acid to the oligosaccharide Gal-beta-1,3-GalNAc and to glycoproteins such as asialofetuin, alpha-1-acid glycoprotein (NeuAc-alpha-2,3-Gal-beta-1,3-GalNAc-) and andasialo-alpha-1-acid glycoprotein. The transferred sialic acid is linked to galactose of Gal-beta-1,3-GalNAc through alpha-2,6-linkage. The chain is Sialyltransferase-like protein 1 from Oryza sativa subsp. japonica (Rice).